Consider the following 292-residue polypeptide: NAD kinase (292 aa).

The Proton acceptor role is filled by Asp-72. NAD(+) contacts are provided by residues 72-73 (DG), 146-147 (NE), His-157, Arg-174, Asp-176, and 187-192 (TAYALS).

This sequence belongs to the NAD kinase family. It depends on a divalent metal cation as a cofactor.

The protein resides in the cytoplasm. It carries out the reaction NAD(+) + ATP = ADP + NADP(+) + H(+). Its function is as follows. Involved in the regulation of the intracellular balance of NAD and NADP, and is a key enzyme in the biosynthesis of NADP. Catalyzes specifically the phosphorylation on 2'-hydroxyl of the adenosine moiety of NAD to yield NADP. The sequence is that of NAD kinase from Shewanella oneidensis (strain ATCC 700550 / JCM 31522 / CIP 106686 / LMG 19005 / NCIMB 14063 / MR-1).